The sequence spans 195 residues: Imidazoleglycerol-phosphate dehydratase (195 aa).

It belongs to the imidazoleglycerol-phosphate dehydratase family.

The protein resides in the cytoplasm. It catalyses the reaction D-erythro-1-(imidazol-4-yl)glycerol 3-phosphate = 3-(imidazol-4-yl)-2-oxopropyl phosphate + H2O. It participates in amino-acid biosynthesis; L-histidine biosynthesis; L-histidine from 5-phospho-alpha-D-ribose 1-diphosphate: step 6/9. The sequence is that of Imidazoleglycerol-phosphate dehydratase from Nitrosomonas eutropha (strain DSM 101675 / C91 / Nm57).